We begin with the raw amino-acid sequence, 517 residues long: Crotonobetaine/carnitine--CoA ligase (517 aa).

This sequence belongs to the ATP-dependent AMP-binding enzyme family.

It catalyses the reaction 4-(trimethylamino)butanoate + ATP + CoA = 4-(trimethylamino)butanoyl-CoA + AMP + diphosphate. The catalysed reaction is crotonobetaine + ATP + CoA = crotonobetainyl-CoA + AMP + diphosphate. The enzyme catalyses (R)-carnitine + ATP + CoA = (R)-carnitinyl-CoA + AMP + diphosphate. Its pathway is amine and polyamine metabolism; carnitine metabolism. Catalyzes the transfer of CoA to carnitine, generating the initial carnitinyl-CoA needed for the CaiB reaction cycle. Also has activity toward crotonobetaine and gamma-butyrobetaine. The protein is Crotonobetaine/carnitine--CoA ligase of Escherichia coli O1:K1 / APEC.